We begin with the raw amino-acid sequence, 180 residues long: MEAVRFAVAVVLVFCYVTSSNAQMTSPPSGGAGGDAHSLPCIQKLMPCQPYLHLATPPPATCCMPLNEIVAKDATCLCAVFNNVDMLKSLNLTKENALDLPKACGAKADVSLCKTSAGTNSSSTPPATPKTPPASSTSTGTGSGSTGNAAPSTAKPTSSAPAINFGGLSFASAVVATLFF.

Residues 1-22 (MEAVRFAVAVVLVFCYVTSSNA) form the signal peptide. 4 disulfides stabilise this stretch: Cys-41–Cys-78, Cys-48–Cys-62, Cys-63–Cys-104, and Cys-76–Cys-113. N-linked (GlcNAc...) asparagine glycans are attached at residues Asn-91 and Asn-120. Composition is skewed to low complexity over residues 116 to 125 (SAGTNSSSTP) and 133 to 156 (PASS…TAKP). The tract at residues 116 to 156 (SAGTNSSSTPPATPKTPPASSTSTGTGSGSTGNAAPSTAKP) is disordered. A lipid anchor (GPI-anchor amidated serine) is attached at Ser-158. Positions 159 to 180 (SAPAINFGGLSFASAVVATLFF) are cleaved as a propeptide — removed in mature form.

This sequence belongs to the plant LTP family. In terms of tissue distribution, restricted to stamen, pollen and sporophytic tissues. Also detected, at low levels, in stems and leaves.

The protein resides in the cell membrane. Lipid transfer protein involved in seed and ovule maturation and development, probably by regulating the fatty acids homeostasis during suberin and sporopollenin biosynthesis or deposition. The sequence is that of Non-specific lipid transfer protein GPI-anchored 3 from Arabidopsis thaliana (Mouse-ear cress).